An 879-amino-acid polypeptide reads, in one-letter code: Alanine--tRNA ligase (879 aa).

His-566, His-570, Cys-668, and His-672 together coordinate Zn(2+).

Belongs to the class-II aminoacyl-tRNA synthetase family. The cofactor is Zn(2+).

It localises to the cytoplasm. The enzyme catalyses tRNA(Ala) + L-alanine + ATP = L-alanyl-tRNA(Ala) + AMP + diphosphate. Functionally, catalyzes the attachment of alanine to tRNA(Ala) in a two-step reaction: alanine is first activated by ATP to form Ala-AMP and then transferred to the acceptor end of tRNA(Ala). Also edits incorrectly charged Ser-tRNA(Ala) and Gly-tRNA(Ala) via its editing domain. The chain is Alanine--tRNA ligase from Listeria innocua serovar 6a (strain ATCC BAA-680 / CLIP 11262).